Reading from the N-terminus, the 388-residue chain is Protein-glutamate methylesterase/protein-glutamine glutaminase 4 (388 aa).

The Response regulatory domain occupies 4 to 121 (KVLVVDDSGF…SGDASKIKRL (118 aa)). Position 55 is a 4-aspartylphosphate (D55). The interval 137–196 (SGASAPASVPQPAKPAAPIPVREPPKPAAPVTRPAEPRAKAPPAKPEPKPEVKAAKSRRT) is disordered. Over residues 148–164 (PAKPAAPIPVREPPKPA) the composition is skewed to pro residues. The CheB-type methylesterase domain occupies 197 to 388 (PRQDYKVVLI…FAPRLIDGVG (192 aa)). Residues S209, H236, and D332 contribute to the active site.

This sequence belongs to the CheB family. Post-translationally, phosphorylated by CheA. Phosphorylation of the N-terminal regulatory domain activates the methylesterase activity.

The protein resides in the cytoplasm. It catalyses the reaction [protein]-L-glutamate 5-O-methyl ester + H2O = L-glutamyl-[protein] + methanol + H(+). The catalysed reaction is L-glutaminyl-[protein] + H2O = L-glutamyl-[protein] + NH4(+). Functionally, involved in chemotaxis. Part of a chemotaxis signal transduction system that modulates chemotaxis in response to various stimuli. Catalyzes the demethylation of specific methylglutamate residues introduced into the chemoreceptors (methyl-accepting chemotaxis proteins or MCP) by CheR. Also mediates the irreversible deamidation of specific glutamine residues to glutamic acid. The chain is Protein-glutamate methylesterase/protein-glutamine glutaminase 4 from Hahella chejuensis (strain KCTC 2396).